Consider the following 162-residue polypeptide: Cyanate hydratase (162 aa).

Catalysis depends on residues R103, E106, and S129.

Belongs to the cyanase family.

The enzyme catalyses cyanate + hydrogencarbonate + 3 H(+) = NH4(+) + 2 CO2. Catalyzes the reaction of cyanate with bicarbonate to produce ammonia and carbon dioxide. This chain is Cyanate hydratase, found in Phaeosphaeria nodorum (strain SN15 / ATCC MYA-4574 / FGSC 10173) (Glume blotch fungus).